We begin with the raw amino-acid sequence, 209 residues long: MARRPQRPAPSGRAGAGRGAAGAAPPGPDARLVVLGEFGRAHGLQGEVRLKSYTAEPMAIGGYGPLLASDGRVVELTALRPAAGTPDILVARVAGVAGRSAAEGLNRLTLSVPRDRLGAPEDEDEFFTADLVGLAAVDAAGTRLGTIRAVPNYGGGDLLEIEPEGGGRPALLPFTRLFVPKVEIAAGRVTIAPPEDLFAPPGPPPEGEG.

The disordered stretch occupies residues 1–28 (MARRPQRPAPSGRAGAGRGAAGAAPPGP). A PRC barrel domain is found at 123 to 197 (EDEFFTADLV…RVTIAPPEDL (75 aa)).

This sequence belongs to the RimM family. As to quaternary structure, binds ribosomal protein uS19.

It is found in the cytoplasm. Its function is as follows. An accessory protein needed during the final step in the assembly of 30S ribosomal subunit, possibly for assembly of the head region. Essential for efficient processing of 16S rRNA. May be needed both before and after RbfA during the maturation of 16S rRNA. It has affinity for free ribosomal 30S subunits but not for 70S ribosomes. In Methylobacterium sp. (strain 4-46), this protein is Ribosome maturation factor RimM.